Here is a 652-residue protein sequence, read N- to C-terminus: Aspartate--tRNA ligase, mitochondrial (652 aa).

The N-terminal 46 residues, 1–46 (MYLGSWLNRLGRGLSRPIGKTKQPIWGSLSRSLTLSSQRVPEFSSF), are a transit peptide targeting the mitochondrion. Phosphothreonine is present on threonine 218. At serine 241 the chain carries Phosphoserine. The segment at 243 to 246 (QQFK) is aspartate. L-aspartate is bound at residue arginine 265. Residues 265 to 267 (RDE) and glutamate 534 contribute to the ATP site. L-aspartate is bound at residue arginine 541. 583–586 (GLDR) is a binding site for ATP.

Belongs to the class-II aminoacyl-tRNA synthetase family. Type 1 subfamily. In terms of assembly, homodimer.

It localises to the mitochondrion matrix. It is found in the mitochondrion membrane. It catalyses the reaction tRNA(Asp) + L-aspartate + ATP = L-aspartyl-tRNA(Asp) + AMP + diphosphate. Functionally, catalyzes the attachment of aspartate to tRNA(Asp) in a two-step reaction: aspartate is first activated by ATP to form Asp-AMP and then transferred to the acceptor end of tRNA(Asp). The chain is Aspartate--tRNA ligase, mitochondrial (Dars2) from Rattus norvegicus (Rat).